Reading from the N-terminus, the 280-residue chain is Para-Rep C2 (280 aa).

The region spanning 1–97 (MARRYCFTLN…ETLISEIGIP (97 aa)) is the CRESS-DNA virus Rep endonuclease domain. An RCR-1 motif is present at residues 6–9 (CFTL). 2 residues coordinate a divalent metal cation: Glu37 and His45. The RCR-2 motif lies at 45–47 (HLQ). The Nuclear localization signal motif lies at 54 to 75 (NKIRLGGLKKKFGNRAHWEIAR). The active-site For DNA cleavage activity is Tyr84. The RCR-3 motif lies at 84 to 87 (YCCK). The Nuclear localization signal signature appears at 97-103 (PVMKGSN). An ATP-binding site is contributed by 172-180 (GSDGGEGKT).

It belongs to the nanoviridea/circoviridae replication-associated protein family. As to quaternary structure, homooligomer (Potential). Rep binds to repeated DNA motifs (iterons). Requires Mg(2+) as cofactor. The cofactor is Mn(2+).

The protein resides in the host nucleus. It catalyses the reaction ATP + H2O = ADP + phosphate + H(+). In terms of biological role, initiates and terminates the replication only of its own subviral DNA molecule. The closed circular ssDNA genome is first converted to a superhelical dsDNA. Rep binds a specific hairpin at the genome origin of replication. Introduces an endonucleolytic nick within the intergenic region of the genome, thereby initiating the rolling circle replication (RCR). Following cleavage, binds covalently to the 5'-phosphate of DNA as a tyrosyl ester. The cleavage gives rise to a free 3'-OH that serves as a primer for the cellular DNA polymerase. The polymerase synthesizes the (+) strand DNA by rolling circle mechanism. After one round of replication, a Rep-catalyzed nucleotidyl transfer reaction releases a circular single-stranded virus genome, thereby terminating the replication. Displays origin-specific DNA cleavage, nucleotidyl transferase, ATPase and helicase activities. The protein is Para-Rep C2 (C2) of Subterranean clover stunt C2 alphasatellite (SCSC2A).